A 61-amino-acid polypeptide reads, in one-letter code: Large ribosomal subunit protein eL37 (61 aa).

Positions 19, 22, 34, and 37 each coordinate Zn(2+). The C4-type zinc finger occupies Cys19–Cys37.

It belongs to the eukaryotic ribosomal protein eL37 family. The cofactor is Zn(2+).

In terms of biological role, binds to the 23S rRNA. This Saccharolobus solfataricus (strain ATCC 35092 / DSM 1617 / JCM 11322 / P2) (Sulfolobus solfataricus) protein is Large ribosomal subunit protein eL37 (rpl37e).